The following is a 360-amino-acid chain: POU domain, class 5, transcription factor 1 (360 aa).

Disordered stretches follow at residues 1-52 and 88-114; these read MAGH…PGVG and GGLE…SPEP. Residues 4–12 carry the 9aaTAD motif; that stretch reads HLASDFAFS. The residue at position 111 (Ser111) is a Phosphoserine; by MAPK. Lys123 is covalently cross-linked (Glycyl lysine isopeptide (Lys-Gly) (interchain with G-Cter in SUMO)). Residues 138–212 form the POU-specific domain; the sequence is DIKALQKELE…LLQKWVEEAD (75 aa). 2 residues coordinate DNA: Arg157 and Gln164. DNA-binding stretches follow at residues 180–186 and 193–196; these read SQTTICR and SFKN. A DNA-binding region (homeobox) is located at residues 230-289; that stretch reads RKRKRTSIENRVRGNLENLFLQCPKPTLQQISHIAQQLGLEKDVVRVWFCNRRQKGKRSS. Thr235 is modified (phosphothreonine). Phosphoserine occurs at positions 236, 289, 290, and 355.

The protein belongs to the POU transcription factor family. Class-5 subfamily. As to quaternary structure, interacts with PKM. Interacts with WWP2. Interacts with UBE2I and ZSCAN10. Interacts with PCGF1. Interacts with ESRRB; recruits ESRRB near the POU5F1-SOX2 element in the NANOG proximal promoter; the interaction is DNA independent. Interacts with ZNF322. Interacts with MAPK8 and MAPK9; the interaction allows MAPK8 and MAPK9 to phosphorylate POU5F1 on Ser-355. Interacts (when phosphorylated on Ser-355) with FBXW8. Interacts with FBXW4. Interacts with SOX2 and SOX15; binds synergistically with either SOX2 or SOX15 to DNA. Interacts with DDX56. In terms of processing, sumoylation enhances the protein stability, DNA binding and transactivation activity. Sumoylation is required for enhanced YES1 expression. Ubiquitinated; undergoes 'Lys-63'-linked polyubiquitination by WWP2 leading to proteasomal degradation. Post-translationally, ERK1/2-mediated phosphorylation at Ser-111 promotes nuclear exclusion and proteasomal degradation. Phosphorylation at Thr-235 and Ser-236 decrease DNA-binding and alters ability to activate transcription. In terms of tissue distribution, expressed in developing brain. Highest levels found in specific cell layers of the cortex, the olfactory bulb, the hippocampus and the cerebellum. Low levels of expression in adult tissues.

It localises to the cytoplasm. It is found in the nucleus. Transcription factor that binds to the octamer motif (5'-ATTTGCAT-3'). Forms a trimeric complex with SOX2 or SOX15 on DNA and controls the expression of a number of genes involved in embryonic development such as YES1, FGF4, UTF1 and ZFP206. Critical for early embryogenesis and for embryonic stem cell pluripotency. This Homo sapiens (Human) protein is POU domain, class 5, transcription factor 1 (POU5F1).